We begin with the raw amino-acid sequence, 537 residues long: Tripeptidyl aminopeptidase (537 aa).

The signal sequence occupies residues 1-36 (MRKSSIRRRATAFGTAGALVTATLIAGAVSAPAASA). The propeptide occupies 37 to 39 (APA). Residues 119-497 (GALIYNPGGP…SRLITERDAG (379 aa)) enclose the AB hydrolase-1 domain. The Nucleophile role is filled by serine 245. Residue aspartate 470 is part of the active site. Residue histidine 499 is the Proton donor of the active site.

It belongs to the peptidase S33 family.

It is found in the secreted. In terms of biological role, cleaves tripeptides from the N-termini of proteins. Does not cleave mono- or dipeptides, or N-terminally blocked peptides. The chain is Tripeptidyl aminopeptidase from Streptomyces lividans.